The primary structure comprises 273 residues: Outer surface protein A (273 aa).

A signal peptide spans Met1–Ala16. A lipid anchor (N-palmitoyl cysteine) is attached at Cys17. Cys17 carries S-diacylglycerol cysteine lipidation.

The protein belongs to the OspA lipoprotein family.

It is found in the cell outer membrane. The protein localises to the cell surface. In Borreliella burgdorferi (Lyme disease spirochete), this protein is Outer surface protein A.